Reading from the N-terminus, the 325-residue chain is Ubiquitin thioesterase OTU1 (325 aa).

A UBX-like region spans residues 7-86; sequence RIRSKTGVEN…NVSSISSNPG (80 aa). One can recognise an OTU domain in the interval 123–246; the sequence is ATRRVTDDDN…GIHYDALSIC (124 aa). A cys-loop region spans residues 128 to 134; the sequence is TDDDNSC. Residue D131 is part of the active site. C134 functions as the Nucleophile in the catalytic mechanism. The interval 185-195 is variable-loop; sequence IQNPKNWGGAI. Residues 235-239 form a his-loop region; the sequence is YDGIH. Position 238 (I238) interacts with substrate. H239 is a catalytic residue. The S2 site stretch occupies residues 265–270; sequence KDSLAK. The C2H2-type zinc-finger motif lies at 292 to 316; it reads LICLNCNKTLKGEKEAAIHASTTGH. H316 is an active-site residue.

The protein localises to the cytoplasm. The enzyme catalyses Thiol-dependent hydrolysis of ester, thioester, amide, peptide and isopeptide bonds formed by the C-terminal Gly of ubiquitin (a 76-residue protein attached to proteins as an intracellular targeting signal).. Functionally, hydrolase that can remove conjugated ubiquitin from proteins and may therefore play an important regulatory role at the level of protein turnover by preventing degradation. The polypeptide is Ubiquitin thioesterase OTU1 (yod1) (Dictyostelium discoideum (Social amoeba)).